The sequence spans 365 residues: MLMSKEDESQMTFSMLPDDLVLNCLARVSKVYYPSLSFVSKKFRSLIASTELQELRSFLGCTSSGLYVCLRFRTNTDYRQICFTLRQKISSSAKILVPISSLDSPFDYRSGVVAVGSDIYAIGGRNLNNSASSKVMVMDCRSHTWREAPSMRVARDDFPSTCVLNGKIYVIGGCKNLDSTNWIEVFDTKTQTWEFLQIPNEEVCRGFNYKIVGYKEAIHVSSLENNRATFMTYEIHKGRWREPHLSLSHGFHFSNCVIENVFYRYSYEMLQWYDSCRKIWKNLKGFVRRSIMNPRGEGVKMVNYGGNIVLLWEECVTIKKKLIWCEEVVIEKKHQGEIWGLLKWSDVVFITDEKNQLVRALAPDV.

The F-box domain occupies 10–58; that stretch reads QMTFSMLPDDLVLNCLARVSKVYYPSLSFVSKKFRSLIASTELQELRSF. 2 Kelch repeats span residues 118-165 and 167-213; these read DIYA…CVLN and KIYV…KIVG.

The chain is Putative F-box/kelch-repeat protein At4g39290 from Arabidopsis thaliana (Mouse-ear cress).